The chain runs to 150 residues: MFRGVTHLNLDAKGRMAFPSRYRDRLMGLCDGEVVATIDYESPCLMLYPLPDWEVLERDLVKLPSLNPQARRLQRLLIGHAHDLQLDGSGRVLLPQPLRDYANLDKKIVLVGQVHRFELWDAEAWEQARTDWLDEARQDGVPDELGSLTL.

SpoVT-AbrB domains lie at 5–52 (VTHL…PLPD) and 81–124 (AHDL…DAEA).

This sequence belongs to the MraZ family. Forms oligomers.

It is found in the cytoplasm. The protein resides in the nucleoid. This is Transcriptional regulator MraZ from Alkalilimnicola ehrlichii (strain ATCC BAA-1101 / DSM 17681 / MLHE-1).